Consider the following 110-residue polypeptide: Large ribosomal subunit protein P2C (110 aa).

Residues 83 to 110 (APAAEEAAKEEAKEEEESDEDMGFGLFD) form a disordered region. Residues 95–104 (KEEEESDEDM) show a composition bias toward acidic residues. Position 100 is a phosphoserine (Ser100).

The protein belongs to the eukaryotic ribosomal protein P1/P2 family. As to quaternary structure, component of the large ribosomal subunit (LSU). Mature yeast ribosomes consist of a small (40S) and a large (60S) subunit. The 40S small subunit contains 1 molecule of ribosomal RNA (18S rRNA) and at least 33 different proteins. The large 60S subunit contains 3 rRNA molecules (25S, 5.8S and 5S rRNA) and at least 46 different proteins. The acidic ribosomal P-proteins form the stalk structure of the 60S subunit. They are organized as a pentameric complex in which uL10/P0 interacts with 2 heterodimers of P1 and P2 proteins.

The protein localises to the cytoplasm. Component of the ribosome, a large ribonucleoprotein complex responsible for the synthesis of proteins in the cell. The small ribosomal subunit (SSU) binds messenger RNAs (mRNAs) and translates the encoded message by selecting cognate aminoacyl-transfer RNA (tRNA) molecules. The large subunit (LSU) contains the ribosomal catalytic site termed the peptidyl transferase center (PTC), which catalyzes the formation of peptide bonds, thereby polymerizing the amino acids delivered by tRNAs into a polypeptide chain. The nascent polypeptides leave the ribosome through a tunnel in the LSU and interact with protein factors that function in enzymatic processing, targeting, and the membrane insertion of nascent chains at the exit of the ribosomal tunnel. This is Large ribosomal subunit protein P2C (rpp203) from Schizosaccharomyces pombe (strain 972 / ATCC 24843) (Fission yeast).